The chain runs to 448 residues: Noelin-2 (448 aa).

A signal peptide spans 1-14 (MRKLRQTGTTIAGG). 2 coiled-coil regions span residues 52–79 (RDGR…LELR) and 130–187 (LEQY…AQKL). N-linked (GlcNAc...) asparagine glycans are attached at residues asparagine 68, asparagine 149, asparagine 269, asparagine 304, asparagine 393, and asparagine 435. An Olfactomedin-like domain is found at 188 to 440 (GCGKLTGVSN…QVLYNVTLFH (253 aa)). Residues cysteine 189 and cysteine 371 are joined by a disulfide bond.

In terms of assembly, peripherally associated with AMPAR complex. AMPAR complex consists of an inner core made of 4 pore-forming GluA/GRIA proteins (GRIA1, GRIA2, GRIA3 and GRIA4) and 4 major auxiliary subunits arranged in a twofold symmetry. One of the two pairs of distinct binding sites is occupied either by CNIH2, CNIH3 or CACNG2, CACNG3. The other harbors CACNG2, CACNG3, CACNG4, CACNG8 or GSG1L. This inner core of AMPAR complex is complemented by outer core constituents binding directly to the GluA/GRIA proteins at sites distinct from the interaction sites of the inner core constituents. Outer core constituents include at least PRRT1, PRRT2, CKAMP44/SHISA9, FRRS1L and NRN1. The proteins of the inner and outer core serve as a platform for other, more peripherally associated AMPAR constituents, including OLFM2. Alone or in combination, these auxiliary subunits control the gating and pharmacology of the AMPAR complex and profoundly impact their biogenesis and protein processing. Interacts with GRIA2. Interacts with OLFM1 and OLFM3. Interacts with SRF; the interaction promotes dissociation of SRF from the transcriptional repressor HEY2. Interacts with RUNX2. As to expression, expressed in the brain (at protein level). In the developing eye, first detected at 12 dpc in the retinal pigmented epithelium and preferentially expressed in differentiating retinal ganglion cells between 15 and 18 dpc. In the brain, expression is detected mainly in the olfactory bulb, cortex, piriform cortex, olfactory trabeculae, and inferior and superior colliculus. In the adult eye, expression is detected mainly in retinal ganglion cells. Expressed in carotid arteries.

The protein localises to the secreted. The protein resides in the synapse. It is found in the membrane. Its subcellular location is the nucleus. It localises to the cytoplasm. Its function is as follows. Involved in transforming growth factor beta (TGF-beta)-induced smooth muscle differentiation. TGF-beta induces expression and nuclear translocation of OLFM2 where it binds to SRF, causing its dissociation from the transcriptional repressor HEY2/HERP1 and facilitating binding of SRF to target genes. Plays a role in AMPAR complex organization. Is a regulator of vascular smooth-muscle cell (SMC) phenotypic switching, that acts by promoting RUNX2 and inhibiting MYOCD binding to SRF. SMC phenotypic switching is the process through which vascular SMCs undergo transition between a quiescent contractile phenotype and a proliferative synthetic phenotype in response to pathological stimuli. SMC phenotypic plasticity is essential for vascular development and remodeling. This is Noelin-2 (Olfm2) from Mus musculus (Mouse).